The sequence spans 576 residues: Proton pump-interactor 3B (576 aa).

A disordered region spans residues 34–63 (SEVTTDEEEDTIFSGGDSSSGLAAEEDSSG). 2 coiled-coil regions span residues 132–155 (RMVIEEKKKEFDTLLEALRNLRCT) and 205–241 (EKEASINRVKSMALELNEVKNELDAITWKINDLSDKL). Residues 369–381 (RSEKVHKMNREDS) show a composition bias toward basic and acidic residues. The tract at residues 369–395 (RSEKVHKMNREDSSSNSSEDGNVITDK) is disordered. The stretch at 411-467 (KKKEEEIDEEALKERKREEQLEKARLVMERKRKLQEKAAAKAAIRAQKEAEKKLKAI) forms a coiled coil. A helical membrane pass occupies residues 555–575 (WVWGLSSAALAVSLVLVVLLL).

It belongs to the plant Proton pump-interactor protein family.

The protein localises to the cell membrane. It localises to the endoplasmic reticulum membrane. May regulate plasma membrane ATPase activity. This is Proton pump-interactor 3B (PPI3B) from Arabidopsis thaliana (Mouse-ear cress).